The following is a 550-amino-acid chain: Chaperonin GroEL (550 aa).

ATP contacts are provided by residues 30–33 (TLGP), Lys51, 87–91 (DGTTT), Gly415, 479–481 (NAA), and Asp495. The disordered stretch occupies residues 525–550 (PKDEKSSSELNSAPGNGMGGGMGGMM). The span at 540–550 (NGMGGGMGGMM) shows a compositional bias: gly residues.

The protein belongs to the chaperonin (HSP60) family. As to quaternary structure, forms a cylinder of 14 subunits composed of two heptameric rings stacked back-to-back. Interacts with the co-chaperonin GroES.

It localises to the cytoplasm. It catalyses the reaction ATP + H2O + a folded polypeptide = ADP + phosphate + an unfolded polypeptide.. Functionally, together with its co-chaperonin GroES, plays an essential role in assisting protein folding. The GroEL-GroES system forms a nano-cage that allows encapsulation of the non-native substrate proteins and provides a physical environment optimized to promote and accelerate protein folding. The chain is Chaperonin GroEL from Buchnera aphidicola subsp. Cinara cedri (strain Cc).